A 51-amino-acid chain; its full sequence is Large ribosomal subunit protein eL39 (51 aa).

It belongs to the eukaryotic ribosomal protein eL39 family. As to quaternary structure, interacts with impact.

The polypeptide is Large ribosomal subunit protein eL39 (rpl39) (Ictalurus punctatus (Channel catfish)).